A 343-amino-acid polypeptide reads, in one-letter code: Biotin synthase (343 aa).

A Radical SAM core domain is found at 36–254; sequence RQVQVSTLLS…IAVARIMMPR (219 aa). Residues C51, C55, and C58 each coordinate [4Fe-4S] cluster. The [2Fe-2S] cluster site is built by C95, C126, C186, and R258.

Belongs to the radical SAM superfamily. Biotin synthase family. Homodimer. Requires [4Fe-4S] cluster as cofactor. It depends on [2Fe-2S] cluster as a cofactor.

It catalyses the reaction (4R,5S)-dethiobiotin + (sulfur carrier)-SH + 2 reduced [2Fe-2S]-[ferredoxin] + 2 S-adenosyl-L-methionine = (sulfur carrier)-H + biotin + 2 5'-deoxyadenosine + 2 L-methionine + 2 oxidized [2Fe-2S]-[ferredoxin]. It participates in cofactor biosynthesis; biotin biosynthesis; biotin from 7,8-diaminononanoate: step 2/2. Its function is as follows. Catalyzes the conversion of dethiobiotin (DTB) to biotin by the insertion of a sulfur atom into dethiobiotin via a radical-based mechanism. The chain is Biotin synthase from Erwinia tasmaniensis (strain DSM 17950 / CFBP 7177 / CIP 109463 / NCPPB 4357 / Et1/99).